We begin with the raw amino-acid sequence, 134 residues long: Large ribosomal subunit protein uL16c (134 aa).

The disordered stretch occupies residues 1–21 (MLSPKRTKYRKHHRGRMRGKA).

The protein belongs to the universal ribosomal protein uL16 family. In terms of assembly, part of the 50S ribosomal subunit.

The protein localises to the plastid. The protein resides in the chloroplast. This Chlorella vulgaris (Green alga) protein is Large ribosomal subunit protein uL16c.